An 88-amino-acid chain; its full sequence is Small ribosomal subunit protein uS15 (88 aa).

Belongs to the universal ribosomal protein uS15 family. In terms of assembly, part of the 30S ribosomal subunit. Forms a bridge to the 50S subunit in the 70S ribosome, contacting the 23S rRNA.

In terms of biological role, one of the primary rRNA binding proteins, it binds directly to 16S rRNA where it helps nucleate assembly of the platform of the 30S subunit by binding and bridging several RNA helices of the 16S rRNA. Forms an intersubunit bridge (bridge B4) with the 23S rRNA of the 50S subunit in the ribosome. The polypeptide is Small ribosomal subunit protein uS15 (Francisella tularensis subsp. holarctica (strain LVS)).